A 271-amino-acid chain; its full sequence is Metal-staphylopine import system ATP-binding protein CntD (271 aa).

Positions 6–251 (VKHLTITDTW…PEHVYTKYLL (246 aa)) constitute an ABC transporter domain. 38–45 (GESGSGKS) serves as a coordination point for ATP.

This sequence belongs to the ABC transporter superfamily. As to quaternary structure, the complex is composed of two ATP-binding proteins (CntD and CntF), two transmembrane proteins (CntB and CntC) and a solute-binding protein (CntA).

It localises to the cell membrane. Functionally, part of the ABC transporter complex CntABCDF (Opp1) involved in the uptake of metal in complex with the metallophore staphylopine (StP). May be involved in the import of a large array of divalent metals ions such as nickel, cobalt, zinc, copper and iron. Probably responsible for energy coupling to the transport system. This chain is Metal-staphylopine import system ATP-binding protein CntD, found in Staphylococcus aureus (strain Mu50 / ATCC 700699).